Here is a 304-residue protein sequence, read N- to C-terminus: Bifunctional protein FolD 3 (304 aa).

NADP(+) contacts are provided by residues 172 to 174 (GRS), Ser197, and Ile238.

It belongs to the tetrahydrofolate dehydrogenase/cyclohydrolase family. As to quaternary structure, homodimer.

The enzyme catalyses (6R)-5,10-methylene-5,6,7,8-tetrahydrofolate + NADP(+) = (6R)-5,10-methenyltetrahydrofolate + NADPH. It catalyses the reaction (6R)-5,10-methenyltetrahydrofolate + H2O = (6R)-10-formyltetrahydrofolate + H(+). Its pathway is one-carbon metabolism; tetrahydrofolate interconversion. Its function is as follows. Catalyzes the oxidation of 5,10-methylenetetrahydrofolate to 5,10-methenyltetrahydrofolate and then the hydrolysis of 5,10-methenyltetrahydrofolate to 10-formyltetrahydrofolate. The chain is Bifunctional protein FolD 3 from Rhizorhabdus wittichii (strain DSM 6014 / CCUG 31198 / JCM 15750 / NBRC 105917 / EY 4224 / RW1) (Sphingomonas wittichii).